The chain runs to 226 residues: Probable thiol methyltransferase 2 (226 aa).

Residues tryptophan 29, tryptophan 33, tryptophan 40, and glycine 67 each coordinate S-adenosyl-L-methionine. Serine 79 is subject to Phosphoserine. S-adenosyl-L-methionine-binding positions include aspartate 88, 116–117, and tyrosine 132; that span reads DF.

This sequence belongs to the class I-like SAM-binding methyltransferase superfamily. TPMT family.

The catalysed reaction is a thiol + S-adenosyl-L-methionine = a methyl thioether + S-adenosyl-L-homocysteine + H(+). Its function is as follows. S-adenosyl-L-methionine-dependent methyltransferase. This Arabidopsis thaliana (Mouse-ear cress) protein is Probable thiol methyltransferase 2 (HOL3).